The chain runs to 130 residues: Fluoride-specific ion channel FluC (130 aa).

4 helical membrane passes run 3–23 (FIFL…YFVG), 39–59 (GTFS…HLAV), 67–87 (FGIF…SYGL), and 102–122 (VSYA…GWFL). 2 residues coordinate Na(+): Gly77 and Thr80.

Belongs to the fluoride channel Fluc/FEX (TC 1.A.43) family.

It localises to the cell inner membrane. It catalyses the reaction fluoride(in) = fluoride(out). Na(+) is not transported, but it plays an essential structural role and its presence is essential for fluoride channel function. Fluoride-specific ion channel. Important for reducing fluoride concentration in the cell, thus reducing its toxicity. The protein is Fluoride-specific ion channel FluC of Helicobacter pylori (strain Shi470).